Reading from the N-terminus, the 330-residue chain is Putative heme-binding peroxidase (330 aa).

Histidine 38 acts as the Proton acceptor in catalysis. Histidine 162 lines the heme b pocket. Tryptophan 178 (tryptophan radical intermediate) is an active-site residue. The disordered stretch occupies residues 286–330 (GEYKSAPQKSPVPGAPGAGKDGEANPLARQNERAHGQAQHALAKL).

The protein belongs to the peroxidase family. Cytochrome c peroxidase subfamily. The cofactor is heme b.

Its function is as follows. Destroys radicals which are normally produced within the cells and which are toxic to biological systems. In Mycosarcoma maydis (Corn smut fungus), this protein is Putative heme-binding peroxidase (CCP2).